The chain runs to 70 residues: Cold shock protein CspV (70 aa).

The 61-residue stretch at 7–67 folds into the CSD domain; sequence GSVKWFNETK…GKKGPQASNV (61 aa).

It is found in the cytoplasm. The sequence is that of Cold shock protein CspV (cspV) from Vibrio cholerae serotype O1 (strain ATCC 39315 / El Tor Inaba N16961).